A 102-amino-acid chain; its full sequence is Large ribosomal subunit protein uL24 (102 aa).

Belongs to the universal ribosomal protein uL24 family. Part of the 50S ribosomal subunit.

One of two assembly initiator proteins, it binds directly to the 5'-end of the 23S rRNA, where it nucleates assembly of the 50S subunit. Functionally, one of the proteins that surrounds the polypeptide exit tunnel on the outside of the subunit. The polypeptide is Large ribosomal subunit protein uL24 (Cupriavidus metallidurans (strain ATCC 43123 / DSM 2839 / NBRC 102507 / CH34) (Ralstonia metallidurans)).